The following is a 274-amino-acid chain: Ribosomal RNA small subunit methyltransferase A (274 aa).

S-adenosyl-L-methionine contacts are provided by asparagine 26, leucine 28, glycine 53, glutamate 74, aspartate 94, and asparagine 114.

Belongs to the class I-like SAM-binding methyltransferase superfamily. rRNA adenine N(6)-methyltransferase family. RsmA subfamily.

Its subcellular location is the cytoplasm. The catalysed reaction is adenosine(1518)/adenosine(1519) in 16S rRNA + 4 S-adenosyl-L-methionine = N(6)-dimethyladenosine(1518)/N(6)-dimethyladenosine(1519) in 16S rRNA + 4 S-adenosyl-L-homocysteine + 4 H(+). Its function is as follows. Specifically dimethylates two adjacent adenosines (A1518 and A1519) in the loop of a conserved hairpin near the 3'-end of 16S rRNA in the 30S particle. May play a critical role in biogenesis of 30S subunits. This Bdellovibrio bacteriovorus (strain ATCC 15356 / DSM 50701 / NCIMB 9529 / HD100) protein is Ribosomal RNA small subunit methyltransferase A.